A 394-amino-acid polypeptide reads, in one-letter code: Argininosuccinate synthase (394 aa).

ATP-binding positions include 7–15 (AYSGGLDTS) and A35. Y85 contributes to the L-citrulline binding site. G115 contacts ATP. Residues T117, N121, and D122 each contribute to the L-aspartate site. Residue N121 participates in L-citrulline binding. L-citrulline-binding residues include R125, S174, S183, E258, and Y270.

The protein belongs to the argininosuccinate synthase family. Type 1 subfamily. Homotetramer.

The protein resides in the cytoplasm. It catalyses the reaction L-citrulline + L-aspartate + ATP = 2-(N(omega)-L-arginino)succinate + AMP + diphosphate + H(+). The protein operates within amino-acid biosynthesis; L-arginine biosynthesis; L-arginine from L-ornithine and carbamoyl phosphate: step 2/3. The sequence is that of Argininosuccinate synthase from Methanopyrus kandleri (strain AV19 / DSM 6324 / JCM 9639 / NBRC 100938).